The following is a 552-amino-acid chain: MERFLRKYNISGDYANATRSILAISPQWTCSHLKRNCLFNGMCAKQNFERAMIAATDAEEPIKAIRLIELAKEAMYDRETVWLQCFKSFSQPYEEDIEGKIKRCGAQLLEDYRKSGMMEEAVKQSALINSERVRLDDSLSAIPYIYVPIKEGQIVNPTFISRYRQIAYYFYNPDAADDWIDPNLFGVRGQHHQIKREVERQINTCPYTGYKGGIFQVMYLPIQLINFLRMDDFARHFNRYASMAIQQYLRVGYLEEIRYVQQLFGKVPSGEFPLHQMMLMRRDFPTRDRNIVEARVKRSGDENWQSWLLPMVLVREGLDQQEKWEWLLEYMDRKHICQLCYLKHSKQIQTCSVIDVRASELIGCSPFRTVKIEEHVGNEPIFKTKLIRDQQIGRIGDHYYTTSCYTGAEALVTTAIHIHRWIRGCGIWNDEGWQEGVFMLGRVLLRWELTKAQRSALLRLFCFVCYGYAPRAYGTVPDWNNLGSFLDIILKGPELSEDEDERAYATMFEMVRCIITLCYAERVHFAGFTAPACESGEVINLAARMSQMWMEY.

This sequence belongs to the orbivirus non-structural protein NS1 family.

This is Non-structural protein NS1 (Segment-5) from Bluetongue virus 1 (isolate Australia) (BTV 1).